The following is a 366-amino-acid chain: Alcohol dehydrogenase (366 aa).

Zn(2+)-binding residues include Cys-41, His-62, Glu-63, and Asp-167.

It belongs to the zinc-containing alcohol dehydrogenase family. As to quaternary structure, homotetramer. It depends on Zn(2+) as a cofactor.

The catalysed reaction is a primary alcohol + NAD(+) = an aldehyde + NADH + H(+). It carries out the reaction a secondary alcohol + NAD(+) = a ketone + NADH + H(+). The enzyme catalyses (R,R)-butane-2,3-diol + NAD(+) = (R)-acetoin + NADH + H(+). It catalyses the reaction an aldehyde + NAD(+) + H2O = a carboxylate + NADH + 2 H(+). Functionally, multifunctional alcohol dehydrogenase exhibiting NAD(+)-dependent dehydrogenase activities for 2,3-butanediol, ethanol and acetaldehyde, and reductase activities for acetoin (NADH-dependent), and diacetyl and acetaldehyde (independently of whether NADH or NADPH is the reductant). The rate of oxidation of 2,3-butanediol is much higher than for the oxidation of ethanol. Has acetaldehyde dehydrogenase activity leading to acetate formation. May function in the release of excess reducing power in the absence of exogenous hydrogen acceptors such as oxygen. This Cupriavidus necator (Alcaligenes eutrophus) protein is Alcohol dehydrogenase (adh).